The following is a 248-amino-acid chain: Protein GrpE (248 aa).

Residues 229-248 form a disordered region; the sequence is AAPKEDTLPAQENQSSPADS. Residues 238 to 248 show a composition bias toward polar residues; it reads AQENQSSPADS.

Belongs to the GrpE family. Homodimer.

The protein localises to the cytoplasm. In terms of biological role, participates actively in the response to hyperosmotic and heat shock by preventing the aggregation of stress-denatured proteins, in association with DnaK and GrpE. It is the nucleotide exchange factor for DnaK and may function as a thermosensor. Unfolded proteins bind initially to DnaJ; upon interaction with the DnaJ-bound protein, DnaK hydrolyzes its bound ATP, resulting in the formation of a stable complex. GrpE releases ADP from DnaK; ATP binding to DnaK triggers the release of the substrate protein, thus completing the reaction cycle. Several rounds of ATP-dependent interactions between DnaJ, DnaK and GrpE are required for fully efficient folding. This is Protein GrpE from Trichormus variabilis (strain ATCC 29413 / PCC 7937) (Anabaena variabilis).